Here is a 102-residue protein sequence, read N- to C-terminus: Iron-sulfur cluster assembly protein CyaY (102 aa).

This sequence belongs to the frataxin family.

Its function is as follows. Involved in iron-sulfur (Fe-S) cluster assembly. May act as a regulator of Fe-S biogenesis. The sequence is that of Iron-sulfur cluster assembly protein CyaY from Actinobacillus succinogenes (strain ATCC 55618 / DSM 22257 / CCUG 43843 / 130Z).